A 430-amino-acid polypeptide reads, in one-letter code: Probable WRKY transcription factor 14 (430 aa).

Residues 211 to 277 (SGEVVPSDLW…YTSEHNHPWP (67 aa)) constitute a DNA-binding region (WRKY). The interval 283–366 (LAGSTRSSTS…APYRPELHDH (84 aa)) is disordered. The segment covering 286–306 (STRSSTSSSSNPNPSKPSTAN) has biased composition (low complexity). Polar residues predominate over residues 307-319 (VNSSSIGSQNTIY). Over residues 340–354 (GDDMELENVDDDDDN) the composition is skewed to acidic residues.

The protein belongs to the WRKY group II-e family.

It localises to the nucleus. In terms of biological role, transcription factor. Interacts specifically with the W box (5'-(T)TGAC[CT]-3'), a frequently occurring elicitor-responsive cis-acting element. The polypeptide is Probable WRKY transcription factor 14 (WRKY14) (Arabidopsis thaliana (Mouse-ear cress)).